A 136-amino-acid chain; its full sequence is Nucleoside diphosphate kinase (136 aa).

ATP is bound by residues K10, F58, R86, T92, R104, and N114. H117 functions as the Pros-phosphohistidine intermediate in the catalytic mechanism.

The protein belongs to the NDK family. In terms of assembly, homotetramer. Mg(2+) is required as a cofactor.

It is found in the cytoplasm. The catalysed reaction is a 2'-deoxyribonucleoside 5'-diphosphate + ATP = a 2'-deoxyribonucleoside 5'-triphosphate + ADP. It catalyses the reaction a ribonucleoside 5'-diphosphate + ATP = a ribonucleoside 5'-triphosphate + ADP. Its function is as follows. Major role in the synthesis of nucleoside triphosphates other than ATP. The ATP gamma phosphate is transferred to the NDP beta phosphate via a ping-pong mechanism, using a phosphorylated active-site intermediate. The chain is Nucleoside diphosphate kinase from Mycobacterium sp. (strain MCS).